The primary structure comprises 405 residues: Envelope glycoprotein M (405 aa).

Residues 1–17 (MKSSKNDTFVYRTWFKT) lie on the Intravirion side of the membrane. A helical transmembrane segment spans residues 18 to 38 (LVVYFVMFVMSAVVPITAMFP). Residues 39–76 (NLGYPCYFNALVDYGALNLTNYNLAHHLTPTLYLEPPE) lie on the Virion surface side of the membrane. The helical transmembrane segment at 77–97 (MFVYITLVFIADCVAFIYYAC) threads the bilayer. Residues 98 to 121 (GEVALIKARKKVSGLTDLSAWVSA) lie on the Intravirion side of the membrane. Residues 122–142 (VGSPTVLFLAILKLWSIQVFI) traverse the membrane as a helical segment. The Virion surface portion of the chain corresponds to 143–149 (QVLSYKH). A helical transmembrane segment spans residues 150 to 170 (VFLSAFVYFLHFLASVLHACA). Over 171–192 (CVTRFSPVWVVKAQDNSIPQDT) the chain is Intravirion. Residues 193–215 (FLWWVVFYLKPIVTNLYLGCLAL) traverse the membrane as a helical segment. The Virion surface portion of the chain corresponds to 216-245 (ETLVFSLSVFLALGNSFYFMVGDMVLGAVN). The helical transmembrane segment at 246–266 (LFLVLPIFWYILTEVWLASFL) threads the bilayer. A topological domain (intravirion) is located at residue R267. The chain crosses the membrane as a helical span at residues 268–288 (HNFGFYCGMFIASIILILPLV). Residues 289 to 299 (RYEAVFVSAKL) lie on the Virion surface side of the membrane. The helical transmembrane segment at 300–320 (HTTVAINVAIIPILCSVAMLI) threads the bilayer. The Intravirion segment spans residues 321–405 (RICRIFKSMR…TTDSEEEIFP (85 aa)). A disordered region spans residues 346–405 (LESEPRPRPSRTPSPGRNRRRSSTSSSSSRSTRRQRPVSTQALISSVLPMTTDSEEEIFP). Residues 386 to 397 (QALISSVLPMTT) are compositionally biased toward polar residues.

The protein belongs to the herpesviridae glycoprotein M family. Interacts (via N-terminus) with gN (via N-terminus). The gM-gN heterodimer forms the gCII complex.

It is found in the virion membrane. The protein resides in the host Golgi apparatus. It localises to the host trans-Golgi network. Its subcellular location is the host endosome membrane. The protein localises to the host nucleus inner membrane. Envelope glycoprotein important for virion assembly and egress. Plays a role in the correct incorporation of gH-gL into virion membrane. Directs the glycoprotein N (gN) to the host trans-Golgi network. In Homo sapiens (Human), this protein is Envelope glycoprotein M.